A 174-amino-acid polypeptide reads, in one-letter code: Crossover junction endodeoxyribonuclease RuvC (174 aa).

Active-site residues include aspartate 8, glutamate 68, and aspartate 140. The Mg(2+) site is built by aspartate 8, glutamate 68, and aspartate 140.

It belongs to the RuvC family. In terms of assembly, homodimer which binds Holliday junction (HJ) DNA. The HJ becomes 2-fold symmetrical on binding to RuvC with unstacked arms; it has a different conformation from HJ DNA in complex with RuvA. In the full resolvosome a probable DNA-RuvA(4)-RuvB(12)-RuvC(2) complex forms which resolves the HJ. Mg(2+) serves as cofactor.

Its subcellular location is the cytoplasm. The enzyme catalyses Endonucleolytic cleavage at a junction such as a reciprocal single-stranded crossover between two homologous DNA duplexes (Holliday junction).. The RuvA-RuvB-RuvC complex processes Holliday junction (HJ) DNA during genetic recombination and DNA repair. Endonuclease that resolves HJ intermediates. Cleaves cruciform DNA by making single-stranded nicks across the HJ at symmetrical positions within the homologous arms, yielding a 5'-phosphate and a 3'-hydroxyl group; requires a central core of homology in the junction. The consensus cleavage sequence is 5'-(A/T)TT(C/G)-3'. Cleavage occurs on the 3'-side of the TT dinucleotide at the point of strand exchange. HJ branch migration catalyzed by RuvA-RuvB allows RuvC to scan DNA until it finds its consensus sequence, where it cleaves and resolves the cruciform DNA. The protein is Crossover junction endodeoxyribonuclease RuvC of Legionella pneumophila (strain Paris).